A 213-amino-acid chain; its full sequence is Glutathione S-transferase DHAR2 (213 aa).

S-glutathionyl cysteine is present on Cys-6. Glutathione is bound by residues Lys-8 and Asp-19. L-ascorbate is bound by residues Lys-8 and Asp-19. The GST N-terminal domain occupies Ala-10–Lys-83. S-glutathionyl cysteine is present on Cys-20. Catalysis depends on Cys-20, which acts as the Nucleophile. Residues Cys-20–Arg-25 carry the Glutathione-binding motif. Lys-47, Val-60, Ser-73, His-160, and Trp-207 together coordinate glutathione. A GST C-terminal domain is found at Tyr-84–Ala-213. Lys-210 serves as a coordination point for L-ascorbate.

Belongs to the GST superfamily. DHAR family. Monomer. Post-translationally, spontaneous S-glutathionylation in the presence of oxidized glutathione (GSSG).

The protein resides in the cytoplasm. It is found in the cytosol. It carries out the reaction RX + glutathione = an S-substituted glutathione + a halide anion + H(+). It catalyses the reaction L-dehydroascorbate + 2 glutathione = glutathione disulfide + L-ascorbate. In terms of biological role, displays a dual function. As a soluble protein, exhibits glutathione-dependent thiol transferase and dehydroascorbate (DHA) reductase activities. Exhibits glutathione-dependent thiol transferase and dehydroascorbate (DHA) reductase activities. Key component of the ascorbate recycling system. Involved in the redox homeostasis, especially in scavenging of ROS under oxidative stresses. Plays a role in ozone tolerance. The protein is Glutathione S-transferase DHAR2 (DHAR2) of Arabidopsis thaliana (Mouse-ear cress).